A 328-amino-acid polypeptide reads, in one-letter code: Malate dehydrogenase (328 aa).

11-17 (GAAGQIG) serves as a coordination point for NAD(+). Substrate is bound by residues Arg-94 and Arg-100. NAD(+) contacts are provided by residues Asn-107, Gln-114, and 131–133 (VGN). Substrate contacts are provided by Asn-133 and Arg-164. Catalysis depends on His-189, which acts as the Proton acceptor.

It belongs to the LDH/MDH superfamily. MDH type 2 family.

The catalysed reaction is (S)-malate + NAD(+) = oxaloacetate + NADH + H(+). Catalyzes the reversible oxidation of malate to oxaloacetate. This is Malate dehydrogenase from Xanthomonas oryzae pv. oryzae (strain PXO99A).